We begin with the raw amino-acid sequence, 46 residues long: Large ribosomal subunit protein bL36B (46 aa).

This sequence belongs to the bacterial ribosomal protein bL36 family.

This chain is Large ribosomal subunit protein bL36B, found in Enterobacter sp. (strain 638).